Reading from the N-terminus, the 415-residue chain is MAYDEVREVDPEVADALTGERHRQNDTLAMIASENHVSEAVMEAQSSELTNKYAEGYPGSRYYGGCEYADDVEELAVARAKELFGADHVNVQPHSGSSANMGVYFATLAPGDKILSLDLTHGGHLSHGHPANFAGQLYEVEQYEVDAETGRLDYEALREHADAFEPDMIVSGFSAYPREVEWERIQAAADAVGALHMADIAHITGLVAAGEHASPVGVADFVTGSTHKTIRAGRGGIVMCDEAFADDIDSAVFPGAQGGPLMHNIAGKAVGFNEALDPAFEEYAAQVVENAAVLGERLQEHGFSLVSGGTDTHLVLVDLRESHPDISGGDVEGELEDVGIVLNANTVPDETRSAFDPSGIRIGTPALTTRGFDADAMETVADCIARVIDNLGDESVYADVADTVADLCEQYPQYE.

Residues Leu-119 and 123-125 contribute to the (6S)-5,6,7,8-tetrahydrofolate site; that span reads GHL. Lys-228 carries the N6-(pyridoxal phosphate)lysine modification. 353 to 355 is a (6S)-5,6,7,8-tetrahydrofolate binding site; sequence SAF.

This sequence belongs to the SHMT family. Homodimer. Requires pyridoxal 5'-phosphate as cofactor.

It localises to the cytoplasm. It carries out the reaction (6R)-5,10-methylene-5,6,7,8-tetrahydrofolate + glycine + H2O = (6S)-5,6,7,8-tetrahydrofolate + L-serine. It functions in the pathway one-carbon metabolism; tetrahydrofolate interconversion. Its pathway is amino-acid biosynthesis; glycine biosynthesis; glycine from L-serine: step 1/1. Catalyzes the reversible interconversion of serine and glycine with tetrahydrofolate (THF) serving as the one-carbon carrier. Also exhibits THF-independent aldolase activity toward beta-hydroxyamino acids, producing glycine and aldehydes, via a retro-aldol mechanism. This chain is Serine hydroxymethyltransferase, found in Halobacterium salinarum (strain ATCC 29341 / DSM 671 / R1).